Here is a 196-residue protein sequence, read N- to C-terminus: Imidazoleglycerol-phosphate dehydratase (196 aa).

The protein belongs to the imidazoleglycerol-phosphate dehydratase family.

Its subcellular location is the cytoplasm. The enzyme catalyses D-erythro-1-(imidazol-4-yl)glycerol 3-phosphate = 3-(imidazol-4-yl)-2-oxopropyl phosphate + H2O. It participates in amino-acid biosynthesis; L-histidine biosynthesis; L-histidine from 5-phospho-alpha-D-ribose 1-diphosphate: step 6/9. The chain is Imidazoleglycerol-phosphate dehydratase from Ralstonia nicotianae (strain ATCC BAA-1114 / GMI1000) (Ralstonia solanacearum).